The primary structure comprises 287 residues: Putative syntaxin-4 (287 aa).

Topologically, residues 1-262 are cytoplasmic; sequence MHQISGINAA…NRKWKIVTCI (262 aa). The stretch at 65-97 forms a coiled coil; it reads KCRKLNDHVDKFIAQARGIRRRLADASEELVQY. The 63-residue stretch at 184 to 246 folds into the t-SNARE coiled-coil homology domain; sequence FDDMKNRATD…EQAQQNVRQA (63 aa). A helical; Anchor for type IV membrane protein membrane pass occupies residues 263–283; the sequence is ALIVLLLVVVYLLSHFLGAII. At 284–287 the chain is on the extracellular side; that stretch reads PGWK.

The protein belongs to the syntaxin family.

The protein resides in the membrane. Potentially involved in docking of synaptic vesicles at presynaptic active zones. This Caenorhabditis elegans protein is Putative syntaxin-4 (syx-4).